The primary structure comprises 246 residues: Homeobox protein SIX6 (246 aa).

Residues 128–187 constitute a DNA-binding region (homeobox); it reads GEQKTHCFKERTRHLLREWYLQDPYPNPSKKRELAQATGLTPTQVGNWFKNRRQRDRAAA. The segment at 190 to 246 is disordered; sequence NRLQQQVLSQGSGRALRAEGDGTPEVLGVATSPAASLSSKAATSAISITSSDSECDI. Over residues 191–201 the composition is skewed to polar residues; the sequence is RLQQQVLSQGS. Thr-212 bears the Phosphothreonine mark. The span at 219-246 shows a compositional bias: low complexity; that stretch reads ATSPAASLSSKAATSAISITSSDSECDI. A phosphoserine mark is found at Ser-221, Ser-225, Ser-227, and Ser-228.

Belongs to the SIX/Sine oculis homeobox family. In terms of assembly, interacts with TLE4 and TLE5. Expressed in the developing and adult retina. Also expressed in the hypothalamic and the pituitary regions.

It is found in the nucleus. Its function is as follows. May be involved in eye development. This is Homeobox protein SIX6 (SIX6) from Homo sapiens (Human).